The sequence spans 250 residues: GTP cyclohydrolase 1 type 2 homolog (250 aa).

A divalent metal cation contacts are provided by H63, H64, D100, H218, and E222.

This sequence belongs to the GTP cyclohydrolase I type 2/NIF3 family. As to quaternary structure, homohexamer.

The chain is GTP cyclohydrolase 1 type 2 homolog from Pyrococcus horikoshii (strain ATCC 700860 / DSM 12428 / JCM 9974 / NBRC 100139 / OT-3).